The primary structure comprises 494 residues: Transcriptional regulator calD (494 aa).

The protein resides in the nucleus. In terms of biological role, transcription co-regulator that might be involved in the regulation of the expression of the gene cluster that mediates the biosynthesis of calbistrins and related compounds such as decumbenones. Calbistrin A is a secondary metabolite with an interesting structure that was recently found to have bioactivity against leukemia cells. It consists of two polyketides linked by an ester bond: a bicyclic decalin containing polyketide and a linear 12 carbon dioic acid structure. The protein is Transcriptional regulator calD of Penicillium decumbens.